The primary structure comprises 258 residues: PHD finger protein ALFIN-LIKE 5 (258 aa).

The disordered stretch occupies residues 143–205 (AKKQTKEKAP…EEEERDNTLC (63 aa)). Over residues 152-165 (PNSTNKPNKPSSKM) the composition is skewed to polar residues. Positions 184 to 200 (DDDESGDEYADEEEEER) are enriched in acidic residues. The PHD-type zinc finger occupies 202 to 254 (NTLCGSCGTNDGKDEFWICCDSCERWYHGKCVKITPARAEHIKHYKCPDCGNK).

This sequence belongs to the Alfin family.

It localises to the nucleus. Histone-binding component that specifically recognizes H3 tails trimethylated on 'Lys-4' (H3K4me3), which mark transcription start sites of virtually all active genes. The sequence is that of PHD finger protein ALFIN-LIKE 5 from Oryza sativa subsp. indica (Rice).